Reading from the N-terminus, the 328-residue chain is MNIAIDAMGGDHAPQEIVRGAARAAAHFSDIRITLIGDEAKIRPYLQNEERISIIHADEVIEATDEPVRAVRRKKNSSMVRMAEEVREGRADACISAGNTGALMAAGLFVVGRIAGIDRPALAPTLPTLDGKGFVFLDVGANVDARPEHLQQYALMGHVYAKQVRGIANPRIGLLNVGTEDQKGNETTKRAFALLKETNLHFIGNVEARDLLQGVADVVVADGFSGNVALKTIEGTAMALFSLLKQTLTSSVTAKLAAAALKPKLSGLKKMMDYSEYGGAALFGLNAPVIKAHGSSDANAIFHAVRQAREMVANDVIGTIKAELERTS.

This sequence belongs to the PlsX family. As to quaternary structure, homodimer. Probably interacts with PlsY.

The protein resides in the cytoplasm. The catalysed reaction is a fatty acyl-[ACP] + phosphate = an acyl phosphate + holo-[ACP]. It functions in the pathway lipid metabolism; phospholipid metabolism. Catalyzes the reversible formation of acyl-phosphate (acyl-PO(4)) from acyl-[acyl-carrier-protein] (acyl-ACP). This enzyme utilizes acyl-ACP as fatty acyl donor, but not acyl-CoA. The chain is Phosphate acyltransferase from Geobacillus thermodenitrificans (strain NG80-2).